We begin with the raw amino-acid sequence, 28 residues long: Cytochrome b6-f complex subunit 6 (28 aa).

A helical transmembrane segment spans residues 2-22; the sequence is VEYLVILSGMFGLALACFFGL.

Belongs to the PetL family. The 4 large subunits of the cytochrome b6-f complex are cytochrome b6, subunit IV (17 kDa polypeptide, PetD), cytochrome f and the Rieske protein, while the 4 small subunits are PetG, PetL, PetM and PetN. The complex functions as a dimer.

It localises to the plastid. It is found in the cyanelle thylakoid membrane. Component of the cytochrome b6-f complex, which mediates electron transfer between photosystem II (PSII) and photosystem I (PSI), cyclic electron flow around PSI, and state transitions. PetL is important for photoautotrophic growth as well as for electron transfer efficiency and stability of the cytochrome b6-f complex. The protein is Cytochrome b6-f complex subunit 6 of Cyanophora paradoxa.